Consider the following 386-residue polypeptide: L-lactate dehydrogenase (386 aa).

In terms of domain architecture, FMN hydroxy acid dehydrogenase spans 1 to 380 (MIISAASDYR…SGDALSRVTR (380 aa)). Residue Tyr24 coordinates substrate. FMN contacts are provided by Ser106 and Gln127. Tyr129 is a binding site for substrate. Position 155 (Thr155) interacts with FMN. Arg164 provides a ligand contact to substrate. Lys251 contacts FMN. His275 serves as the catalytic Proton acceptor. Arg278 provides a ligand contact to substrate. Residue 306 to 330 (DSGIRSGLDVVRMLALGADAVLLGR) participates in FMN binding.

The protein belongs to the FMN-dependent alpha-hydroxy acid dehydrogenase family. It depends on FMN as a cofactor.

It is found in the cell inner membrane. The catalysed reaction is (S)-lactate + A = pyruvate + AH2. Its function is as follows. Catalyzes the conversion of L-lactate to pyruvate. Is coupled to the respiratory chain. In Xanthomonas campestris pv. campestris (strain B100), this protein is L-lactate dehydrogenase.